The sequence spans 145 residues: D-aminoacyl-tRNA deacylase (145 aa).

The short motif at 137 to 138 (GP) is the Gly-cisPro motif, important for rejection of L-amino acids element.

The protein belongs to the DTD family. Homodimer.

It localises to the cytoplasm. The enzyme catalyses glycyl-tRNA(Ala) + H2O = tRNA(Ala) + glycine + H(+). It catalyses the reaction a D-aminoacyl-tRNA + H2O = a tRNA + a D-alpha-amino acid + H(+). In terms of biological role, an aminoacyl-tRNA editing enzyme that deacylates mischarged D-aminoacyl-tRNAs. Also deacylates mischarged glycyl-tRNA(Ala), protecting cells against glycine mischarging by AlaRS. Acts via tRNA-based rather than protein-based catalysis; rejects L-amino acids rather than detecting D-amino acids in the active site. By recycling D-aminoacyl-tRNA to D-amino acids and free tRNA molecules, this enzyme counteracts the toxicity associated with the formation of D-aminoacyl-tRNA entities in vivo and helps enforce protein L-homochirality. This Shigella dysenteriae serotype 1 (strain Sd197) protein is D-aminoacyl-tRNA deacylase.